Reading from the N-terminus, the 375-residue chain is Queuine tRNA-ribosyltransferase (375 aa).

Catalysis depends on Asp89, which acts as the Proton acceptor. Residues 89–93, Asp143, Gln187, and Gly214 each bind substrate; that span reads DSGGF. The tract at residues 245–251 is RNA binding; it reads GVGKPED. Asp264 functions as the Nucleophile in the catalytic mechanism. Positions 269-273 are RNA binding; important for wobble base 34 recognition; sequence TRNAR. Zn(2+)-binding residues include Cys302, Cys304, Cys307, and His333.

The protein belongs to the queuine tRNA-ribosyltransferase family. As to quaternary structure, homodimer. Within each dimer, one monomer is responsible for RNA recognition and catalysis, while the other monomer binds to the replacement base PreQ1. Zn(2+) serves as cofactor.

It catalyses the reaction 7-aminomethyl-7-carbaguanine + guanosine(34) in tRNA = 7-aminomethyl-7-carbaguanosine(34) in tRNA + guanine. It functions in the pathway tRNA modification; tRNA-queuosine biosynthesis. Catalyzes the base-exchange of a guanine (G) residue with the queuine precursor 7-aminomethyl-7-deazaguanine (PreQ1) at position 34 (anticodon wobble position) in tRNAs with GU(N) anticodons (tRNA-Asp, -Asn, -His and -Tyr). Catalysis occurs through a double-displacement mechanism. The nucleophile active site attacks the C1' of nucleotide 34 to detach the guanine base from the RNA, forming a covalent enzyme-RNA intermediate. The proton acceptor active site deprotonates the incoming PreQ1, allowing a nucleophilic attack on the C1' of the ribose to form the product. After dissociation, two additional enzymatic reactions on the tRNA convert PreQ1 to queuine (Q), resulting in the hypermodified nucleoside queuosine (7-(((4,5-cis-dihydroxy-2-cyclopenten-1-yl)amino)methyl)-7-deazaguanosine). This chain is Queuine tRNA-ribosyltransferase, found in Salmonella agona (strain SL483).